The chain runs to 87 residues: Omega-lycotoxin-Am1a (87 aa).

An N-terminal signal peptide occupies residues 1–17 (MKLSIFFVLFFIAIAYC). Residues 18–40 (QPEFLDDEEDEVEETLPVAEEGR) constitute a propeptide that is removed on maturation. 4 disulfides stabilise this stretch: Cys-44/Cys-59, Cys-51/Cys-64, Cys-58/Cys-84, and Cys-66/Cys-82.

The protein belongs to the neurotoxin omega-lctx family. In terms of tissue distribution, expressed by the venom gland.

Its subcellular location is the secreted. Its function is as follows. Modulates Cav2.1/CACNA1A voltage-gated calcium channels (P/Q-type currents) in rat cerebellar Purkinje cells and hippocampal CA1-CA3 neurons. At saturating concentrations (&gt;10 nM) decelerates activation kinetics and slightly increases peak amplitude without affecting deactivation kinetics. In vivo, does not cause death when intravenously injected into mice. In rat models, through its activity on Cav2.1/CACNA1A, has an ameliorative effect on memory defects provoked by hyperstimulation of N-methyl-D-aspartate receptors (NMDARs) in the hippocampus. This chain is Omega-lycotoxin-Am1a, found in Alopecosa marikovskyi (Wolf spider).